A 1489-amino-acid polypeptide reads, in one-letter code: Sex-determining transformer protein 2 (1489 aa).

The first 33 residues, 1 to 33 (MKLAFNKLLVASVVFTVLSFGLLLASLFTTTAT), serve as a signal peptide directing secretion. 11 consecutive transmembrane segments (helical) span residues 454-474 (MIYFILGACALMVALFAAFAF), 489-509 (GFITGLLFIFLCKSGGLILID), 513-533 (LCYITMHLAFNLVMTARVTFI), 600-620 (YWFLIAIVLVPVIGVYWFFID), 622-642 (DVQKICIVLLPAFLIAAFEEM), 749-769 (AVVVSSVAALLILLSIGLLFI), 931-951 (IFAAAVLAGFFSIIVVFFSIG), 958-978 (LAFAFFVVGNRLEIAAIVSLF), 986-1006 (YTNVAVFVGFLAAWTPFCDLA), 1041-1061 (VQIFAIFLTATILLIVITAII), and 1066-1086 (AFFIPTVILLITLLLAVFNSL). The segment at 1138-1288 (EFSIRPTENT…EQQEVTDDVA (151 aa)) is interaction with fem-3. 3 disordered regions span residues 1143–1176 (PTENTKHYAPRPIDNSDPPEQAADEEVVNQDPSM), 1233–1393 (LLRQ…YPPS), and 1412–1489 (RNLP…TPGL). Composition is skewed to basic and acidic residues over residues 1275 to 1298 (DPAKEQQEVTDDVATRYKEEEVRK), 1326 to 1340 (VSREAPEDSPNREPR), and 1423 to 1433 (RPRDWDQRRLV). The segment at 1402–1423 (CEDVYWKYNERNLPDNVPMPPR) is MX regulatory domain; required for tra-1 binding. Residues 1444 to 1456 (VPPPGRSAIPIPP) show a composition bias toward pro residues. Positions 1460–1482 (RLRERRREQHLREQEARRNRPES) are enriched in basic and acidic residues.

As to quaternary structure, interacts with tra-1 and fem-3.

Its subcellular location is the membrane. Plays a major role in controlling sexual cell fates. Promotes female development in XX animals where it sequesters one or more of the FEM proteins to the membrane thereby freeing the tra-1 protein (a putative transcription factor) to enter the nucleus and promote female development. In XO animals it acts as a receptor for her-1 which prevents it from binding to FEM proteins thereby repressing the activity of tra-1. Negatively regulates male development when bound to fem-3 and is required together with tra-1 for promoting spermatogenesis. Also required for feminizing tra-3 activity. This is Sex-determining transformer protein 2 from Caenorhabditis briggsae.